We begin with the raw amino-acid sequence, 534 residues long: Cytochrome P450 714B1 (534 aa).

Position 1 (methionine 1) is a topological domain, lumenal. Residues 2–22 (VVVVAAAMAAASLCCGVAAYL) traverse the membrane as a helical; Signal-anchor for type III membrane protein segment. Topologically, residues 23–534 (YYVLWLAPER…RSKCDWAGFD (512 aa)) are cytoplasmic. Cysteine 472 is a binding site for heme.

It belongs to the cytochrome P450 family. Heme serves as cofactor. In terms of tissue distribution, highly expressed in spikelet and uppermost internode. Detected in shoots, roots, leaves and anthers.

It localises to the membrane. Its function is as follows. Catalyzes the 13-hydroxylation of gibberellins (GAs). Determines the ratio of GA4 and GA1. Converts GA12 into GA53. The chain is Cytochrome P450 714B1 (CYP714B1) from Oryza sativa subsp. japonica (Rice).